A 313-amino-acid chain; its full sequence is Protein-methionine-sulfoxide reductase catalytic subunit MsrP (313 aa).

Residues 1-44 (MARWRPDTAEREATPEALYLRRREFLALGAAGAVGLLLPRGARA) constitute a signal peptide (tat-type signal). Residues Asn-76, 79 to 80 (YE), Cys-134, Thr-169, Asn-217, Arg-222, and 233 to 235 (GAK) each bind Mo-molybdopterin.

The protein belongs to the MsrP family. In terms of assembly, heterodimer of a catalytic subunit (MsrP) and a heme-binding subunit (MsrQ). Mo-molybdopterin serves as cofactor. Predicted to be exported by the Tat system. The position of the signal peptide cleavage has not been experimentally proven.

It localises to the periplasm. It carries out the reaction L-methionyl-[protein] + a quinone + H2O = L-methionyl-(S)-S-oxide-[protein] + a quinol. The enzyme catalyses L-methionyl-[protein] + a quinone + H2O = L-methionyl-(R)-S-oxide-[protein] + a quinol. Part of the MsrPQ system that repairs oxidized periplasmic proteins containing methionine sulfoxide residues (Met-O), using respiratory chain electrons. Thus protects these proteins from oxidative-stress damage caused by reactive species of oxygen and chlorine generated by the host defense mechanisms. MsrPQ is essential for the maintenance of envelope integrity under bleach stress, rescuing a wide series of structurally unrelated periplasmic proteins from methionine oxidation. The catalytic subunit MsrP is non-stereospecific, being able to reduce both (R-) and (S-) diastereoisomers of methionine sulfoxide. The sequence is that of Protein-methionine-sulfoxide reductase catalytic subunit MsrP from Anaeromyxobacter dehalogenans (strain 2CP-C).